Consider the following 432-residue polypeptide: MTESDVAESIGDIVSRLNNALDDLETKKNQTPSVLKGPTVSQERPSAPYRQKIEKLSAEVVDSNPYSRLMALQRMGIVRDYEQIRDKTVAVVGVGGVGSVVAEMLTRCGIGKLILFDYDKVEIANMNRLFYQPNQAGLSKVEAARDTLIHVNPDVQIEVHNFNITTMDNFDVFVGRIRNGSLKSGKIDLVLSCVDNFEARMAVNMACNEENQIWMESGVSENAVSGHIQYIEPGKTACFACVPPLVVASNIDERTLKREGVCAASLPTTMAVVAGFLVMNTLKYLLNFGEVSHYVGYNALADFFPRESIKPNPSCDDRHCQIRQKEYEEKISSEPITLDIQAPEDEPIIHEENDWGIEVVDSDTTEAPSSSAATEVAPGLKFAYEPTQTPKKNSSDNLKLSPSQAVTKEWMENIRDALLEEDRLKKEQNKRK.

The disordered stretch occupies residues 25–47 (ETKKNQTPSVLKGPTVSQERPSA). Positions 29 to 44 (NQTPSVLKGPTVSQER) are enriched in polar residues. ATP contacts are provided by Gly96, Asp117, Lys140, Asn163, and Asn196. Zn(2+) is bound by residues Cys238 and Cys241. Cys262 functions as the Glycyl thioester intermediate in the catalytic mechanism. Residues Cys315 and Cys320 each coordinate Zn(2+). The interval 363-406 (DTTEAPSSSAATEVAPGLKFAYEPTQTPKKNSSDNLKLSPSQAV) is disordered. Residues 386–406 (PTQTPKKNSSDNLKLSPSQAV) are compositionally biased toward polar residues.

The protein belongs to the ubiquitin-activating E1 family. UBA5 subfamily. As to quaternary structure, interacts with ufc-1.

Its function is as follows. E1-like enzyme which activates ufm-1. Required for interaction between ufm-1 and ufc-1. This is Ubiquitin-like modifier-activating enzyme 5 from Caenorhabditis briggsae.